The sequence spans 748 residues: Choline O-acetyltransferase (748 aa).

Positions 1-10 (MGLRTAKKRG) are enriched in basic residues. The disordered stretch occupies residues 1–89 (MGLRTAKKRG…EWCGAASAEA (89 aa)). The span at 17–32 (WKREEGGGTRGRREVR) shows a compositional bias: basic and acidic residues. The span at 40–53 (GGRGDPGDVGGPAG) shows a compositional bias: gly residues. Low complexity-rich tracts occupy residues 54–65 (NPGCSPHPRAAT) and 73–89 (HTPAHTPEWCGAASAEA). Ser125 is subject to Phosphoserine. Catalysis depends on His442, which acts as the Proton acceptor. Position 473 is a phosphoserine (Ser473). CoA is bound by residues 520–532 (GKTFIKKQKCSPD), Ser558, and Gln659. Residues 727–748 (PTESKPLATKEKATRPSQGHQP) are disordered.

It belongs to the carnitine/choline acetyltransferase family.

It carries out the reaction choline + acetyl-CoA = acetylcholine + CoA. Its function is as follows. Catalyzes the reversible synthesis of acetylcholine (ACh) from acetyl CoA and choline at cholinergic synapses. The protein is Choline O-acetyltransferase (CHAT) of Homo sapiens (Human).